Here is a 473-residue protein sequence, read N- to C-terminus: NAD-dependent protein deacetylase SRT1 (473 aa).

The region spanning 27–267 (SHLLQCKIEE…AGVMESLNMK (241 aa)) is the Deacetylase sirtuin-type domain. NAD(+) is bound by residues 52–71 (GAGI…KGIW) and 114–117 (QNVD). The active-site Proton acceptor is H134. Zn(2+) contacts are provided by C142, C145, C167, and C172. Residues 209 to 211 (GTS), 235 to 237 (NLQ), and V253 contribute to the NAD(+) site. Positions 447-473 (LEGSGTSRKRSRTGKRKSKALAEETKA) are disordered. Residues 453 to 465 (SRKRSRTGKRKSK) are compositionally biased toward basic residues.

This sequence belongs to the sirtuin family. Class IV subfamily. In terms of assembly, binds to the promoter region of genes influenced by ethylene. Interacts with ENAP1; this interaction is enhanced in the presence of ethylene. Zn(2+) is required as a cofactor.

It localises to the nucleus. It catalyses the reaction N(6)-acetyl-L-lysyl-[protein] + NAD(+) + H2O = 2''-O-acetyl-ADP-D-ribose + nicotinamide + L-lysyl-[protein]. NAD-dependent protein deacetylase. Has deacetylase activity towards H3K9Ac. May have a function in the safeguard against genome instability and DNA damage to ensure plant cell growth. Involved in responses to ethylene leading to the transcriptional repression of some ethylene-responsive genes via the regulation of histone acetylation H3K9Ac. The sequence is that of NAD-dependent protein deacetylase SRT1 from Arabidopsis thaliana (Mouse-ear cress).